The primary structure comprises 742 residues: F-box only protein 30 (742 aa).

The TRAF-type zinc-finger motif lies at 49 to 108 (EHRLLCPFERVPCLNSNFGCPFTLARNKVAEHLEMCPASVVCCTMEWNRWPVSYSDRKSY). Positions 214–242 (SLQGTTNEMDEESNRESSQDRNAKDQDHL) are disordered. Residues 225–242 (ESNRESSQDRNAKDQDHL) are compositionally biased toward basic and acidic residues. A Phosphoserine modification is found at serine 379. Positions 607 to 653 (SDHLSSLPFEVLQHIAGFLDGFSLCQLACVSRLMRDICGSLLQSRGM) constitute an F-box domain.

Part of a SCF (SKP1-cullin-F-box) protein ligase complex. Interacts with SKP1, CUL1 and RBX1/ROC1. Auto-ubiquitinated. Post-translationally, may be neddylated. Neddylation may be required for E3 ligase activity.

The protein operates within protein modification; protein ubiquitination. Substrate-recognition component of the SCF (SKP1-CUL1-F-box protein)-type E3 ubiquitin ligase complex. Required for muscle atrophy following denervation. This chain is F-box only protein 30 (Fbxo30), found in Rattus norvegicus (Rat).